Here is a 198-residue protein sequence, read N- to C-terminus: Holliday junction branch migration complex subunit RuvA (198 aa).

A domain I region spans residues 1-63; sequence MYDYIKGQLT…EDAHLLFGFH (63 aa). A domain II region spans residues 64 to 142; it reads TEDEKDVFLK…EAPQETGHTK (79 aa). The interval 143–147 is flexible linker; the sequence is ARSNK. The tract at residues 148-198 is domain III; it reads AGNTQLDEAIEALLALGYKAKELKKIRAFFEETSETAEQYIKSALKLLMKG.

Belongs to the RuvA family. As to quaternary structure, homotetramer. Forms an RuvA(8)-RuvB(12)-Holliday junction (HJ) complex. HJ DNA is sandwiched between 2 RuvA tetramers; dsDNA enters through RuvA and exits via RuvB. An RuvB hexamer assembles on each DNA strand where it exits the tetramer. Each RuvB hexamer is contacted by two RuvA subunits (via domain III) on 2 adjacent RuvB subunits; this complex drives branch migration. In the full resolvosome a probable DNA-RuvA(4)-RuvB(12)-RuvC(2) complex forms which resolves the HJ.

The protein resides in the cytoplasm. Functionally, the RuvA-RuvB-RuvC complex processes Holliday junction (HJ) DNA during genetic recombination and DNA repair, while the RuvA-RuvB complex plays an important role in the rescue of blocked DNA replication forks via replication fork reversal (RFR). RuvA specifically binds to HJ cruciform DNA, conferring on it an open structure. The RuvB hexamer acts as an ATP-dependent pump, pulling dsDNA into and through the RuvAB complex. HJ branch migration allows RuvC to scan DNA until it finds its consensus sequence, where it cleaves and resolves the cruciform DNA. The chain is Holliday junction branch migration complex subunit RuvA from Streptococcus pyogenes serotype M2 (strain MGAS10270).